The following is a 143-amino-acid chain: Transcriptional regulator MraZ (143 aa).

2 consecutive SpoVT-AbrB domains span residues T5–E47 and T76–A119.

The protein belongs to the MraZ family. As to quaternary structure, forms oligomers.

The protein localises to the cytoplasm. It localises to the nucleoid. This Mycolicibacterium smegmatis (strain ATCC 700084 / mc(2)155) (Mycobacterium smegmatis) protein is Transcriptional regulator MraZ.